The sequence spans 156 residues: Small ribosomal subunit protein bS6 (156 aa).

The tract at residues 98–156 (GHDFRDQRSHHGQAGEFRKREPQQKSKEQSEFSKEKKSFSKSVTKKTVVSKPKETKEEK) is disordered. A compositionally biased stretch (basic and acidic residues) spans 113-135 (EFRKREPQQKSKEQSEFSKEKKS). Over residues 137-147 (SKSVTKKTVVS) the composition is skewed to low complexity.

This sequence belongs to the bacterial ribosomal protein bS6 family.

Functionally, binds together with bS18 to 16S ribosomal RNA. This chain is Small ribosomal subunit protein bS6, found in Mycoplasmopsis synoviae (strain 53) (Mycoplasma synoviae).